The chain runs to 294 residues: Elongation factor Ts (294 aa).

The interval 79 to 82 (TDFV) is involved in Mg(2+) ion dislocation from EF-Tu.

Belongs to the EF-Ts family.

It localises to the cytoplasm. Its function is as follows. Associates with the EF-Tu.GDP complex and induces the exchange of GDP to GTP. It remains bound to the aminoacyl-tRNA.EF-Tu.GTP complex up to the GTP hydrolysis stage on the ribosome. The polypeptide is Elongation factor Ts (Shouchella clausii (strain KSM-K16) (Alkalihalobacillus clausii)).